Consider the following 2251-residue polypeptide: U3 small nucleolar RNA-associated protein 10 (2251 aa).

One copy of the HEAT repeat lies at 945 to 983; that stretch reads VVPLLLTALADAEAAIRLAAIACLAHILAICKYAGDLAK. Transmembrane regions (helical) follow at residues 962–982 and 1460–1480; these read LAAIACLAHILAICKYAGDLA and LLVDILGADDFAAAVAMLLVD.

Belongs to the HEATR1/UTP10 family. Component of the ribosomal small subunit (SSU) processome.

Its subcellular location is the nucleus. The protein resides in the nucleolus. It localises to the membrane. Functionally, involved in nucleolar processing of pre-18S ribosomal RNA. Involved in ribosome biosynthesis. The chain is U3 small nucleolar RNA-associated protein 10 from Mycosarcoma maydis (Corn smut fungus).